The sequence spans 430 residues: Trigger factor (430 aa).

Positions 163–248 (GDTVVFDFAG…IHEIKAQELP (86 aa)) constitute a PPIase FKBP-type domain.

This sequence belongs to the FKBP-type PPIase family. Tig subfamily.

The protein localises to the cytoplasm. The catalysed reaction is [protein]-peptidylproline (omega=180) = [protein]-peptidylproline (omega=0). In terms of biological role, involved in protein export. Acts as a chaperone by maintaining the newly synthesized protein in an open conformation. Functions as a peptidyl-prolyl cis-trans isomerase. In Exiguobacterium sibiricum (strain DSM 17290 / CCUG 55495 / CIP 109462 / JCM 13490 / 255-15), this protein is Trigger factor.